The sequence spans 403 residues: Ubiquitin-like modifier-activating enzyme 5 (403 aa).

5 residues coordinate ATP: Gly81, Asp102, Lys125, Asn148, and Asn182. Residues Cys224 and Cys227 each contribute to the Zn(2+) site. The active-site Glycyl thioester intermediate is the Cys248. Zn(2+)-binding residues include Cys301 and Cys306. A compositionally biased stretch (basic and acidic residues) spans 306–315 (CRKQQEEYKK). A disordered region spans residues 306-337 (CRKQQEEYKKRAPAQPTQETAPQEEEEVVHED). The short motif at 333 to 345 (VVHEDNEWGIELV) is the UFM1-interacting sequence (UIS) element. The segment at 346–376 (SEVSEEELKNSSGPVPTLPEGITVAYTVPKK) is linker. A phosphoserine mark is found at Ser357 and Ser392. Residues 388 to 403 (DSGESLEDLMARMKKM) carry the UFC1-binding sequence (UFC) motif.

It belongs to the ubiquitin-activating E1 family. UBA5 subfamily. Homodimer; homodimerization is required for UFM1 activation. Interacts (via UIS motif) with UFM1; binds UFM1 via a trans-binding mechanism in which UFM1 interacts with distinct sites in both subunits of the UBA5 homodimer. Interacts (via C-terminus) with UFC1. Interacts (via UIS motif) with GABARAPL2 and, with lower affinity, with GABARAP and GABARAPL1.

It is found in the cytoplasm. The protein localises to the nucleus. The protein resides in the endoplasmic reticulum membrane. Its subcellular location is the golgi apparatus. E1-like enzyme which specifically catalyzes the first step in ufmylation. Activates UFM1 by first adenylating its C-terminal glycine residue with ATP, and thereafter linking this residue to the side chain of a cysteine residue in E1, yielding a UFM1-E1 thioester and free AMP. Activates UFM1 via a trans-binding mechanism, in which UFM1 interacts with distinct sites in both subunits of the UBA5 homodimer. Trans-binding also promotes stabilization of the UBA5 homodimer, and enhances ATP-binding. Transfer of UFM1 from UBA5 to the E2-like enzyme UFC1 also takes place using a trans mechanism. Ufmylation plays a key role in various processes, such as ribosome recycling, response to DNA damage, interferon response or reticulophagy (also called ER-phagy). Ufmylation is essential for erythroid differentiation of both megakaryocytes and erythrocytes. This Rattus norvegicus (Rat) protein is Ubiquitin-like modifier-activating enzyme 5.